Consider the following 618-residue polypeptide: Carbamoyl phosphate synthase large chain, C-terminal section (618 aa).

The oligomerization domain stretch occupies residues Met1–Glu78. The carbamoyl phosphate synthetic domain stretch occupies residues Ser79 to Glu477. Residues Ser208–Leu399 form the ATP-grasp domain. ATP contacts are provided by Arg244, Lys283, Leu285, Glu290, Gly315, Val316, His317, Ser318, Gln358, and Glu370. Residues Gln358, Glu370, and Asn372 each coordinate Mg(2+). Positions 358, 370, and 372 each coordinate Mn(2+). In terms of domain architecture, MGS-like spans Met476 to Phe618. The segment at Leu478 to Phe618 is allosteric domain.

This sequence belongs to the CarB family. In terms of assembly, composed of two chains; the small (or glutamine) chain promotes the hydrolysis of glutamine to ammonia, which is used by the large (or ammonia) chain to synthesize carbamoyl phosphate. Tetramer of heterodimers (alpha,beta)4. Mg(2+) serves as cofactor. It depends on Mn(2+) as a cofactor.

The catalysed reaction is hydrogencarbonate + L-glutamine + 2 ATP + H2O = carbamoyl phosphate + L-glutamate + 2 ADP + phosphate + 2 H(+). It carries out the reaction hydrogencarbonate + NH4(+) + 2 ATP = carbamoyl phosphate + 2 ADP + phosphate + 2 H(+). Its pathway is amino-acid biosynthesis; L-arginine biosynthesis; carbamoyl phosphate from bicarbonate: step 1/1. It functions in the pathway pyrimidine metabolism; UMP biosynthesis via de novo pathway; (S)-dihydroorotate from bicarbonate: step 1/3. Large subunit of the glutamine-dependent carbamoyl phosphate synthetase (CPSase). CPSase catalyzes the formation of carbamoyl phosphate from the ammonia moiety of glutamine, carbonate, and phosphate donated by ATP, constituting the first step of 2 biosynthetic pathways, one leading to arginine and/or urea and the other to pyrimidine nucleotides. The large subunit (synthetase) binds the substrates ammonia (free or transferred from glutamine from the small subunit), hydrogencarbonate and ATP and carries out an ATP-coupled ligase reaction, activating hydrogencarbonate by forming carboxy phosphate which reacts with ammonia to form carbamoyl phosphate. The chain is Carbamoyl phosphate synthase large chain, C-terminal section (carB2) from Methanocaldococcus jannaschii (strain ATCC 43067 / DSM 2661 / JAL-1 / JCM 10045 / NBRC 100440) (Methanococcus jannaschii).